The chain runs to 1192 residues: Probable phospholipid-transporting ATPase IM (1192 aa).

At 1 to 44 (MFCSEKKLREVERIVKANDREYNEKFQYADNRIHTSKYNILTFL) the chain is on the cytoplasmic side. A helical membrane pass occupies residues 45–66 (PINLFEQFQRVANAYFLCLLIL). The Exoplasmic loop segment spans residues 67–72 (QLIPEI). A helical transmembrane segment spans residues 73–92 (SSLTWFTTIVPLVLVITMTA). Topologically, residues 93 to 276 (VKDATDDYFR…TSIDRLMNTL (184 aa)) are cytoplasmic. The chain crosses the membrane as a helical span at residues 277–298 (VLWIFGFLICLGIILAIGNSIW). Over 299 to 327 (ESQTGDQFRTFLFWNEGEKSSVFSGFLTF) the chain is Exoplasmic loop. A helical transmembrane segment spans residues 328 to 349 (WSYIIILNTVVPISLYVSVEVI). Topologically, residues 350 to 871 (RLGHSYFINW…GRWSYFRMCK (522 aa)) are cytoplasmic. Catalysis depends on Asp-392, which acts as the 4-aspartylphosphate intermediate. Residues Asp-392, Lys-393, Thr-394, Glu-496, Phe-537, Lys-560, Arg-594, Thr-674, Gly-675, Asp-676, Arg-789, and Lys-795 each contribute to the ATP site. Asp-392 is a Mg(2+) binding site. Residue Thr-394 coordinates Mg(2+). Asp-815 lines the Mg(2+) pocket. Asn-818 and Asp-819 together coordinate ATP. Asp-819 serves as a coordination point for Mg(2+). Residues 872-892 (FLCYFFYKNFAFTLVHFWFGF) traverse the membrane as a helical segment. Over 893-904 (FCGFSAQTVYDQ) the chain is Exoplasmic loop. The helical transmembrane segment at 905–924 (WFITLFNIVYTSLPVLAMGI) threads the bilayer. The Cytoplasmic segment spans residues 925–954 (FDQDVSDQNSVDCPQLYKPGQLNLLFNKRK). The helical transmembrane segment at 955–976 (FFICVLHGIYTSLVLFFIPYGA) threads the bilayer. Over 977–990 (FYNVAGEDGQHIAD) the chain is Exoplasmic loop. Residues 991–1013 (YQSFAVTMATSLVIVVSVQIALD) traverse the membrane as a helical segment. The Cytoplasmic portion of the chain corresponds to 1014-1019 (TSYWTF). A helical transmembrane segment spans residues 1020-1040 (INHVFIWGSIAIYFSILFTMH). Over 1041-1060 (SNGIFGIFPNQFPFVGNARH) the chain is Exoplasmic loop. A helical transmembrane segment spans residues 1061–1085 (SLTQKCIWLVILLTTVASVMPVVAF). Topologically, residues 1086–1192 (RFLKVDLYPT…SFSQDKTVKL (107 aa)) are cytoplasmic. Residues 1104-1125 (QKAQKKARPPSSRRPRTRRSSS) are compositionally biased toward basic residues. Disordered regions lie at residues 1104-1130 (QKAQ…RSGY) and 1143-1163 (TSGK…EKTH).

This sequence belongs to the cation transport ATPase (P-type) (TC 3.A.3) family. Type IV subfamily. Component of a P4-ATPase flippase complex which consists of a catalytic alpha subunit and an accessory beta subunit. Interacts with beta subunits TMEM30A and TMEM30B. The cofactor is Mg(2+). Ubiquitously expressed at moderate levels.

Its subcellular location is the cell membrane. It localises to the golgi apparatus. It catalyses the reaction ATP + H2O + phospholipidSide 1 = ADP + phosphate + phospholipidSide 2.. Component of a P4-ATPase flippase complex which catalyzes the hydrolysis of ATP coupled to the transport of aminophospholipids from the outer to the inner leaflet of various membranes and ensures the maintenance of asymmetric distribution of phospholipids. Phospholipid translocation also seems to be implicated in vesicle formation and in uptake of lipid signaling molecules. This Homo sapiens (Human) protein is Probable phospholipid-transporting ATPase IM (ATP8B4).